Here is a 164-residue protein sequence, read N- to C-terminus: 3-hydroxyacyl-[acyl-carrier-protein] dehydratase FabZ (164 aa).

Residue His-61 is part of the active site.

Belongs to the thioester dehydratase family. FabZ subfamily.

It is found in the cytoplasm. The catalysed reaction is a (3R)-hydroxyacyl-[ACP] = a (2E)-enoyl-[ACP] + H2O. In terms of biological role, involved in unsaturated fatty acids biosynthesis. Catalyzes the dehydration of short chain beta-hydroxyacyl-ACPs and long chain saturated and unsaturated beta-hydroxyacyl-ACPs. This chain is 3-hydroxyacyl-[acyl-carrier-protein] dehydratase FabZ, found in Ralstonia nicotianae (strain ATCC BAA-1114 / GMI1000) (Ralstonia solanacearum).